A 156-amino-acid chain; its full sequence is Small ribosomal subunit protein uS7 (156 aa).

It belongs to the universal ribosomal protein uS7 family. Part of the 30S ribosomal subunit. Contacts proteins S9 and S11.

In terms of biological role, one of the primary rRNA binding proteins, it binds directly to 16S rRNA where it nucleates assembly of the head domain of the 30S subunit. Is located at the subunit interface close to the decoding center, probably blocks exit of the E-site tRNA. In Geotalea daltonii (strain DSM 22248 / JCM 15807 / FRC-32) (Geobacter daltonii), this protein is Small ribosomal subunit protein uS7.